We begin with the raw amino-acid sequence, 107 residues long: U1-lycotoxin-Ls1h (107 aa).

The signal sequence occupies residues 1-20 (MMKVLVVVALLVTLISYSSS). A propeptide spanning residues 21-41 (EGIDDLEADELLSLMANEQTR) is cleaved from the precursor. 3 disulfide bridges follow: Cys-44/Cys-59, Cys-51/Cys-68, and Cys-70/Cys-84.

Belongs to the neurotoxin 19 (CSTX) family. 04 (U1-Lctx) subfamily. As to expression, expressed by the venom gland.

The protein resides in the secreted. The polypeptide is U1-lycotoxin-Ls1h (Lycosa singoriensis (Wolf spider)).